The primary structure comprises 434 residues: Trigger factor (434 aa).

One can recognise a PPIase FKBP-type domain in the interval 160–245; sequence GDKVKMNFVG…LTEVQAANLP (86 aa).

It belongs to the FKBP-type PPIase family. Tig subfamily.

It is found in the cytoplasm. The enzyme catalyses [protein]-peptidylproline (omega=180) = [protein]-peptidylproline (omega=0). Involved in protein export. Acts as a chaperone by maintaining the newly synthesized protein in an open conformation. Functions as a peptidyl-prolyl cis-trans isomerase. The protein is Trigger factor of Shewanella baltica (strain OS185).